We begin with the raw amino-acid sequence, 307 residues long: Methionyl-tRNA formyltransferase (307 aa).

Position 110 to 113 (110 to 113 (SLLP)) interacts with (6S)-5,6,7,8-tetrahydrofolate.

Belongs to the Fmt family.

It carries out the reaction L-methionyl-tRNA(fMet) + (6R)-10-formyltetrahydrofolate = N-formyl-L-methionyl-tRNA(fMet) + (6S)-5,6,7,8-tetrahydrofolate + H(+). Functionally, attaches a formyl group to the free amino group of methionyl-tRNA(fMet). The formyl group appears to play a dual role in the initiator identity of N-formylmethionyl-tRNA by promoting its recognition by IF2 and preventing the misappropriation of this tRNA by the elongation apparatus. The chain is Methionyl-tRNA formyltransferase from Chromobacterium violaceum (strain ATCC 12472 / DSM 30191 / JCM 1249 / CCUG 213 / NBRC 12614 / NCIMB 9131 / NCTC 9757 / MK).